A 124-amino-acid chain; its full sequence is Large ribosomal subunit protein bL12 (124 aa).

The protein belongs to the bacterial ribosomal protein bL12 family. In terms of assembly, homodimer. Part of the ribosomal stalk of the 50S ribosomal subunit. Forms a multimeric L10(L12)X complex, where L10 forms an elongated spine to which 2 to 4 L12 dimers bind in a sequential fashion. Binds GTP-bound translation factors.

In terms of biological role, forms part of the ribosomal stalk which helps the ribosome interact with GTP-bound translation factors. Is thus essential for accurate translation. The protein is Large ribosomal subunit protein bL12 of Brucella anthropi (strain ATCC 49188 / DSM 6882 / CCUG 24695 / JCM 21032 / LMG 3331 / NBRC 15819 / NCTC 12168 / Alc 37) (Ochrobactrum anthropi).